We begin with the raw amino-acid sequence, 23 residues long: Fimbrial protein (23 aa).

A disulfide bridge connects residues Cys-8 and Cys-21.

It belongs to the N-Me-Phe pilin family. As to quaternary structure, the pili are polar flexible filaments of about 5.4 nanometers diameter and 2.5 micrometers average length; they consist of only a single polypeptide chain arranged in a helical configuration of five subunits per turn in the assembled pilus.

Its subcellular location is the fimbrium. This is Fimbrial protein (pil) from Pseudomonas aeruginosa.